A 296-amino-acid polypeptide reads, in one-letter code: Cleavage and polyadenylation specificity factor subunit 4 (296 aa).

5 consecutive C3H1-type zinc fingers follow at residues 35–63 (KSIA…RHIR), 64–91 (GDRT…HEYD), 92–119 (MTKM…HIDP), 120–147 (QSKV…HLRR), and 149–171 (LCMD…HPHF). A CCHC-type 1 zinc finger spans residues 189–206 (PTCHYCGELGHKANSCKQ). The segment at 222-254 (HSGGHSGGYSGHSGHIEGADDMQSNHHSQPHGP) is disordered. Residues 266–283 (ITCYKCGNKGHYANKCPK) form a CCHC-type 2 zinc finger.

Component of the cleavage and polyadenylation specificity factor (CPSF) complex, composed of at least Clp, Cpsf73, Cpsf100 and Cpsf160. As to expression, during oogenesis, expression is detected in the germarium, in nurse cells, in the oocyte, and in the somatically derived follicular epithelial cells (at protein level). At oogenesis stage 12, nurse cells degenerate and their content is transferred into the oocyte. In larvae, expressed in all organs and disks (at protein level). In the larval salivary gland, expression is initially confined to cells at the anterior end but later expands throughout the entire gland (at protein level).

The protein localises to the nucleus. In terms of biological role, component of the cleavage and polyadenylation specificity factor (CPSF) complex that plays a key role in pre-mRNA 3'-end formation, recognizing the AAUAAA signal sequence and interacting with poly(A) polymerase and other factors to bring about cleavage and poly(A) addition. Has endonuclease activity. Binds RNA polymers with a preference for G- and/or C-rich clusters. Binds single-stranded DNA non-specifically. The chain is Cleavage and polyadenylation specificity factor subunit 4 (Clp) from Drosophila melanogaster (Fruit fly).